A 78-amino-acid chain; its full sequence is D-alanyl carrier protein (78 aa).

The region spanning 1 to 78 is the Carrier domain; the sequence is MEFREQVLDL…KIVEVLEELR (78 aa). Position 36 is an O-(pantetheine 4'-phosphoryl)serine (Ser36).

The protein belongs to the DltC family. In terms of processing, 4'-phosphopantetheine is transferred from CoA to a specific serine of apo-DCP.

It is found in the cytoplasm. It participates in cell wall biogenesis; lipoteichoic acid biosynthesis. Functionally, carrier protein involved in the D-alanylation of lipoteichoic acid (LTA). The loading of thioester-linked D-alanine onto DltC is catalyzed by D-alanine--D-alanyl carrier protein ligase DltA. The DltC-carried D-alanyl group is further transferred to cell membrane phosphatidylglycerol (PG) by forming an ester bond, probably catalyzed by DltD. D-alanylation of LTA plays an important role in modulating the properties of the cell wall in Gram-positive bacteria, influencing the net charge of the cell wall. In Staphylococcus xylosus, this protein is D-alanyl carrier protein.